The primary structure comprises 118 residues: Large ribosomal subunit protein bL20 (118 aa).

This sequence belongs to the bacterial ribosomal protein bL20 family.

In terms of biological role, binds directly to 23S ribosomal RNA and is necessary for the in vitro assembly process of the 50S ribosomal subunit. It is not involved in the protein synthesizing functions of that subunit. The polypeptide is Large ribosomal subunit protein bL20 (Marinomonas sp. (strain MWYL1)).